Reading from the N-terminus, the 324-residue chain is HPr kinase/phosphorylase (324 aa).

Residues H146 and K167 contribute to the active site. ATP is bound at residue 161–168; sequence GDSGLGKS. S168 lines the Mg(2+) pocket. The active-site Proton acceptor; for phosphorylation activity. Proton donor; for dephosphorylation activity is the D185. An important for the catalytic mechanism of both phosphorylation and dephosphorylation region spans residues 209-218; sequence LEVRGLGLLD. E210 is a Mg(2+) binding site. R250 is an active-site residue. The tract at residues 271-276 is important for the catalytic mechanism of dephosphorylation; sequence QVAAGR.

This sequence belongs to the HPrK/P family. In terms of assembly, homohexamer. It depends on Mg(2+) as a cofactor.

It carries out the reaction [HPr protein]-L-serine + ATP = [HPr protein]-O-phospho-L-serine + ADP + H(+). The enzyme catalyses [HPr protein]-O-phospho-L-serine + phosphate + H(+) = [HPr protein]-L-serine + diphosphate. In terms of biological role, catalyzes the ATP- as well as the pyrophosphate-dependent phosphorylation of a specific serine residue in HPr, a phosphocarrier protein of the phosphoenolpyruvate-dependent sugar phosphotransferase system (PTS). HprK/P also catalyzes the pyrophosphate-producing, inorganic phosphate-dependent dephosphorylation (phosphorolysis) of seryl-phosphorylated HPr (P-Ser-HPr). The sequence is that of HPr kinase/phosphorylase from Ralstonia nicotianae (strain ATCC BAA-1114 / GMI1000) (Ralstonia solanacearum).